The primary structure comprises 550 residues: CTP synthase (550 aa).

Residues 1–277 are amidoligase domain; sequence MNGSADAGPR…GRAVERALGL (277 aa). Residue Ser23 participates in CTP binding. Position 23 (Ser23) interacts with UTP. Residue 24–29 coordinates ATP; sequence SLGKGI. Residue Tyr64 participates in L-glutamine binding. Residue Asp81 coordinates ATP. Mg(2+) is bound by residues Asp81 and Glu151. Residues 158–160, 198–203, and Lys234 contribute to the CTP site; these read DIE and KTKPTQ. UTP-binding positions include 198–203 and Lys234; that span reads KTKPTQ. One can recognise a Glutamine amidotransferase type-1 domain in the interval 302-549; it reads KIAIAGKYVK…VEAALAYQER (248 aa). Position 364 (Gly364) interacts with L-glutamine. The Nucleophile; for glutamine hydrolysis role is filled by Cys391. L-glutamine-binding positions include 392–395, Glu415, and Arg472; that span reads LGLQ. Active-site residues include His522 and Glu524.

It belongs to the CTP synthase family. In terms of assembly, homotetramer.

It carries out the reaction UTP + L-glutamine + ATP + H2O = CTP + L-glutamate + ADP + phosphate + 2 H(+). The enzyme catalyses L-glutamine + H2O = L-glutamate + NH4(+). The catalysed reaction is UTP + NH4(+) + ATP = CTP + ADP + phosphate + 2 H(+). It functions in the pathway pyrimidine metabolism; CTP biosynthesis via de novo pathway; CTP from UDP: step 2/2. Allosterically activated by GTP, when glutamine is the substrate; GTP has no effect on the reaction when ammonia is the substrate. The allosteric effector GTP functions by stabilizing the protein conformation that binds the tetrahedral intermediate(s) formed during glutamine hydrolysis. Inhibited by the product CTP, via allosteric rather than competitive inhibition. Catalyzes the ATP-dependent amination of UTP to CTP with either L-glutamine or ammonia as the source of nitrogen. Regulates intracellular CTP levels through interactions with the four ribonucleotide triphosphates. The chain is CTP synthase from Thermus thermophilus (strain ATCC BAA-163 / DSM 7039 / HB27).